A 553-amino-acid polypeptide reads, in one-letter code: Formate--tetrahydrofolate ligase (553 aa).

63–70 (TPAGEGKT) contributes to the ATP binding site.

This sequence belongs to the formate--tetrahydrofolate ligase family.

It catalyses the reaction (6S)-5,6,7,8-tetrahydrofolate + formate + ATP = (6R)-10-formyltetrahydrofolate + ADP + phosphate. It functions in the pathway one-carbon metabolism; tetrahydrofolate interconversion. The polypeptide is Formate--tetrahydrofolate ligase (Oenococcus oeni (strain ATCC BAA-331 / PSU-1)).